The primary structure comprises 96 residues: Co-chaperonin GroES (96 aa).

This sequence belongs to the GroES chaperonin family. Heptamer of 7 subunits arranged in a ring. Interacts with the chaperonin GroEL.

Its subcellular location is the cytoplasm. Functionally, together with the chaperonin GroEL, plays an essential role in assisting protein folding. The GroEL-GroES system forms a nano-cage that allows encapsulation of the non-native substrate proteins and provides a physical environment optimized to promote and accelerate protein folding. GroES binds to the apical surface of the GroEL ring, thereby capping the opening of the GroEL channel. The chain is Co-chaperonin GroES from Polaromonas sp. (strain JS666 / ATCC BAA-500).